Consider the following 493-residue polypeptide: 3-octaprenyl-4-hydroxybenzoate carboxy-lyase (493 aa).

Residue asparagine 172 coordinates Mn(2+). Residues 175 to 177, 189 to 191, and 194 to 195 each bind prenylated FMN; these read IYR, RWL, and RG. Glutamate 238 contacts Mn(2+). Residue aspartate 287 is the Proton donor of the active site.

This sequence belongs to the UbiD family. Homohexamer. It depends on prenylated FMN as a cofactor. Requires Mn(2+) as cofactor.

The protein localises to the cell membrane. The enzyme catalyses a 4-hydroxy-3-(all-trans-polyprenyl)benzoate + H(+) = a 2-(all-trans-polyprenyl)phenol + CO2. It functions in the pathway cofactor biosynthesis; ubiquinone biosynthesis. Its function is as follows. Catalyzes the decarboxylation of 3-octaprenyl-4-hydroxy benzoate to 2-octaprenylphenol, an intermediate step in ubiquinone biosynthesis. The polypeptide is 3-octaprenyl-4-hydroxybenzoate carboxy-lyase (Shewanella sp. (strain MR-4)).